The primary structure comprises 39 residues: Photosystem II reaction center protein L (39 aa).

A helical transmembrane segment spans residues 18–38; that stretch reads SLYLGLLLVFVLGILFSSYFF.

Belongs to the PsbL family. As to quaternary structure, PSII is composed of 1 copy each of membrane proteins PsbA, PsbB, PsbC, PsbD, PsbE, PsbF, PsbH, PsbI, PsbJ, PsbK, PsbL, PsbM, PsbT, PsbX, PsbY, PsbZ, Psb30/Ycf12, peripheral proteins PsbO, CyanoQ (PsbQ), PsbU, PsbV and a large number of cofactors. It forms dimeric complexes.

Its subcellular location is the cellular thylakoid membrane. One of the components of the core complex of photosystem II (PSII). PSII is a light-driven water:plastoquinone oxidoreductase that uses light energy to abstract electrons from H(2)O, generating O(2) and a proton gradient subsequently used for ATP formation. It consists of a core antenna complex that captures photons, and an electron transfer chain that converts photonic excitation into a charge separation. This subunit is found at the monomer-monomer interface and is required for correct PSII assembly and/or dimerization. The protein is Photosystem II reaction center protein L of Trichormus variabilis (strain ATCC 29413 / PCC 7937) (Anabaena variabilis).